The chain runs to 1853 residues: DNA-directed RNA polymerase II subunit RPB1 (1853 aa).

8 residues coordinate Zn(2+): C66, C69, C76, H79, C106, C109, C149, and C177. The tract at residues 256–268 (PAVVTFGSAKNQD) is lid loop. The segment at 314–331 (NCIPGLPTATQKGGRPLK) is rudder loop. Positions 489, 491, and 493 each coordinate Mg(2+). Residues 827 to 839 (PSEFFFHAMGGRE) are bridging helix. Residue K1260 forms a Glycyl lysine isopeptide (Lys-Gly) (interchain with G-Cter in ubiquitin) linkage. 2 disordered regions span residues 1520 to 1568 (PWSP…PRTP) and 1589 to 1853 (SPHY…DPQN). Low complexity-rich tracts occupy residues 1589–1811 (SPHY…TPSP) and 1821–1853 (YSPS…DPQN). Repeat copies occupy residues 1592 to 1598 (YSPTSPS), 1599 to 1605 (YSPTSPA), 1616 to 1622 (YSPTSPS), 1623 to 1629 (YSPTSPS), 1630 to 1636 (YSPTSPS), 1637 to 1643 (YSPTSPS), 1644 to 1650 (YSPTSPS), 1651 to 1657 (YSPTSPS), 1658 to 1664 (YSPTSPS), 1665 to 1671 (YSPTSPS), 1679 to 1685 (YSPTSPT), 1686 to 1692 (YSPTSPT), 1693 to 1699 (YSPTSPT), 1700 to 1706 (YSPTSPT), 1707 to 1713 (YSPTSPS), 1717 to 1723 (YSPSSPK), 1724 to 1730 (YSPSSPT), 1731 to 1737 (YSPTSPS), 1752 to 1758 (YSPSSPT), 1759 to 1765 (YTPSSPT), 1779 to 1785 (YSPTSPT), 1786 to 1792 (YSPTSPS), 1800 to 1806 (YSPTSPT), 1821 to 1827 (YSPSSPT), 1828 to 1834 (YSPSSPT), and 1842 to 1848 (YSPSSPT). The tract at residues 1592–1848 (YSPTSPSYSP…SPSYSPSSPT (257 aa)) is C-terminal domain (CTD); 26 X 7 AA approximate tandem repeats of Y-[ST]-P-[ST]-S-P-[AGKNQRST].

This sequence belongs to the RNA polymerase beta' chain family. In terms of assembly, component of the RNA polymerase II (Pol II) complex consisting of 12 subunits. Interacts with sig-7. Post-translationally, the tandem 7 residues repeats in the C-terminal domain (CTD) can be highly phosphorylated. The phosphorylation activates Pol II. Phosphorylation occurs mainly at residues 'Ser-2' and 'Ser-5' of the heptapeptide repeat and starts at the 3- to 4-cell embryonic stage. This phosphorylation also occurs in the early stages of oocyte development and is not detected in oocytes arrested at the meiotic diakinesis stage. In the somatic lineage, phosphorylation at 'Ser-2' is mediated by cdk-12 downstream of cdk-9 whereas in the germline lineage cdk-12 phosphorylates 'Ser-2' independently of cdk-9. Phosphorylation is likely mediated by cdk-7. May be dephosphorylated by fcp-1 in diakinetic oocytes and in 1-cell and 2-cell embryos. Dephosphorylated at 'Ser-5' of the heptapeptide repeat by ssup-72. The phosphorylation state is believed to result from the balanced action of site-specific CTD kinases and phosphatase, and a 'CTD code' that specifies the position of Pol II within the transcription cycle has been proposed. In terms of processing, following transcription stress, the elongating form of RNA polymerase II (RNA pol IIo) is polyubiquitinated via 'Lys-63'-linkages on Lys-1260 at DNA damage sites without leading to degradation: ubiquitination promotes RNA pol IIo backtracking to allow access by the transcription-coupled nucleotide excision repair (TC-NER) machinery. Subsequent DEF1-dependent polyubiquitination by the elongin complex via 'Lys-48'-linkages may lead to proteasome-mediated degradation; presumably at stalled RNA pol II where TC-NER has failed, to halt global transcription and enable 'last resort' DNA repair pathways.

The protein localises to the nucleus. The protein resides in the chromosome. The catalysed reaction is RNA(n) + a ribonucleoside 5'-triphosphate = RNA(n+1) + diphosphate. In terms of biological role, DNA-dependent RNA polymerase catalyzes the transcription of DNA into RNA using the four ribonucleoside triphosphates as substrates. Largest and catalytic component of RNA polymerase II which synthesizes mRNA precursors and many functional non-coding RNAs. Forms the polymerase active center together with the second largest subunit. Pol II is the central component of the basal RNA polymerase II transcription machinery. It is composed of mobile elements that move relative to each other. RPB1 is part of the core element with the central large cleft, the clamp element that moves to open and close the cleft and the jaws that are thought to grab the incoming DNA template. At the start of transcription, a single-stranded DNA template strand of the promoter is positioned within the central active site cleft of Pol II. A bridging helix emanates from RPB1 and crosses the cleft near the catalytic site and is thought to promote translocation of Pol II by acting as a ratchet that moves the RNA-DNA hybrid through the active site by switching from straight to bent conformations at each step of nucleotide addition. During transcription elongation, Pol II moves on the template as the transcript elongates. Elongation is influenced by the phosphorylation status of the C-terminal domain (CTD) of Pol II largest subunit (RPB1), which serves as a platform for assembly of factors that regulate transcription initiation, elongation, termination and mRNA processing. Involved in the transcription of several genes including those involved in embryogenesis. The chain is DNA-directed RNA polymerase II subunit RPB1 from Caenorhabditis briggsae.